A 181-amino-acid chain; its full sequence is MSVEVTNETAWQIDGKIFSDLGVWVMSQMRVSTQSDLTIMFVDPDPIAQLHMRWMNLEGPTDVMSFPMDELRPGDGGTEMEGVLGDIVLCPWVAAQQALAAGHSTMEEMMLLTIHGILHLLGYDHVTPEQERQMFGLQRQLLLTFFALRQGAGARATLPAGTPDALAEWDREHAAGGKTAK.

Zn(2+)-binding residues include His115, His119, and His125.

Belongs to the endoribonuclease YbeY family. Requires Zn(2+) as cofactor.

It is found in the cytoplasm. Its function is as follows. Single strand-specific metallo-endoribonuclease involved in late-stage 70S ribosome quality control and in maturation of the 3' terminus of the 16S rRNA. This is Endoribonuclease YbeY from Bifidobacterium adolescentis (strain ATCC 15703 / DSM 20083 / NCTC 11814 / E194a).